The sequence spans 349 residues: UDP-N-acetylenolpyruvoylglucosamine reductase (349 aa).

The region spanning 24 to 197 is the FAD-binding PCMH-type domain; it reads FGIDATARFA…VAVTFRLPKR (174 aa). The active site involves Arg-173. Residue Ser-249 is the Proton donor of the active site. The active site involves Glu-345.

The protein belongs to the MurB family. Requires FAD as cofactor.

Its subcellular location is the cytoplasm. The catalysed reaction is UDP-N-acetyl-alpha-D-muramate + NADP(+) = UDP-N-acetyl-3-O-(1-carboxyvinyl)-alpha-D-glucosamine + NADPH + H(+). It functions in the pathway cell wall biogenesis; peptidoglycan biosynthesis. In terms of biological role, cell wall formation. This chain is UDP-N-acetylenolpyruvoylglucosamine reductase, found in Burkholderia ambifaria (strain MC40-6).